Consider the following 727-residue polypeptide: MAAAVSTAPRAPLPAGAVSSSCCSSSSSSASMSRRWDPSPNPSSGSGSRLFLAARRGERLRVRRLAGAAPAPAPRRRVSSVVRCGGGGGGVRSPDDADAGSGERRRGWDALFHDAFQGAVRRWSEYVGSHWPLAPAGKDAGLGKRVESRREEQVRGEVEEEEGKWSWERWKQHFALIEESERLVDELQLQLRTAVYREDFRSAHKLKLAIAATSKNDTVGRAISDLNSAIEEERYMDATYIRDHAGAGLLGWWSGISGNLSDPYGLIIRISAEHGRYVAKSYDTRQLNSDGPGFPIFEIYFAEANGGYNLQAVHLKPDDSDSQQLSNTLREKLGMDSINISSSSFGAKHEDHNEGVNMDDQNSDDSDISAGPAGFKNLPSDSTPVPRVKILKVVPMENVNQDYIIKIFDQMSDEDDENDNPEDEIESSEDIGDGDNVEEAEAASAEDNVDESGDESDIEALISIDFITEDDKDFMSPSSTKAFERMPARLERRDRFSFSFYTEQYSKRQDVEKVQGISKEKVGLRTAQQDDDDLQFDRVKLVGSNRKLSVLQLGIKQHNNKVQQKLYGVTHFSRIQIPVSSDPLTGLYMTASGFDSEILSLQRKFGQWREDDSSEEHRDLQFYEYVEAVKLTGDNLVPAGQVVFRAKVGKHYQLPHKGIIPRELGVVARYKGERRIADPGFQNPRWVDGELLILDGKFIRDGPVIAFFYWTSNFHLFEFFRRLKLPD.

Disordered stretches follow at residues 1–51 (MAAA…SRLF), 65–102 (LAGA…AGSG), 340–381 (ISSS…LPSD), and 413–455 (DEDD…SGDE). Residues 1-83 (MAAAVSTAPR…PRRRVSSVVR (83 aa)) constitute a chloroplast transit peptide. Composition is skewed to low complexity over residues 19-33 (SSSC…ASMS) and 42-51 (PSSGSGSRLF). Acidic residues predominate over residues 413 to 441 (DEDDENDNPEDEIESSEDIGDGDNVEEAE).

The protein resides in the plastid. It is found in the chloroplast. In terms of biological role, together with EX2, enables higher plants to perceive singlet oxygen as a stress signal in plastid that activates a genetically determined nuclear stress response program which triggers a programmed cell death (PCD). This transfer of singlet oxygen-induced stress-related signals from the plastid to the nucleus that triggers genetically controlled PCD pathway is unique to photosynthetic eukaryotes and operates under mild stress conditions, impeding photosystem II (PSII) without causing photooxidative damage of the plant. This Oryza sativa subsp. japonica (Rice) protein is Protein EXECUTER 1, chloroplastic.